Here is a 206-residue protein sequence, read N- to C-terminus: Ras-related protein RABG3f (206 aa).

15–23 (GDSGVGKTS) is a binding site for GTP. Residues 37-45 (YKATIGADF) carry the Effector region motif. Residues 63–67 (DTAGQ), 125–128 (NKVD), and 158–159 (SA) contribute to the GTP site. Residues Cys-204 and Cys-206 are each lipidated (S-geranylgeranyl cysteine). Cys-206 carries the post-translational modification Cysteine methyl ester.

This sequence belongs to the small GTPase superfamily. Rab family. Interacts with VPS35A.

The protein localises to the endosome membrane. The protein resides in the vacuole membrane. It localises to the prevacuolar compartment membrane. With respect to regulation, regulated by guanine nucleotide exchange factors (GEFs) which promote the exchange of bound GDP for free GTP. Regulated by the MON1-CCZ1 complex which serves as a link between Rab5 and Rab7 protein families in PVCs and mediates PVC maturation. Essential for trafficking from prevacuolar compartments to vacuoles. Involved in the trafficking of newly synthesized protein to vacuoles. Essential for plant growth. Participates in the recruitment of the core retromer components to the endosomal membrane by interacting with VPS35A. The chain is Ras-related protein RABG3f (RABG3F) from Arabidopsis thaliana (Mouse-ear cress).